The primary structure comprises 809 residues: Eukaryotic translation initiation factor 3 subunit C (809 aa).

Residues 1 to 102 (MSRFFAASYE…DSDESDEASK (102 aa)) are disordered. 2 stretches are compositionally biased toward acidic residues: residues 18–30 (SEED…EEEL) and 37–59 (SEEE…DSDD). One can recognise a PCI domain in the interval 605–780 (FHEHINLDLI…SVLSIAKGAE (176 aa)).

Belongs to the eIF-3 subunit C family. In terms of assembly, component of the eukaryotic translation initiation factor 3 (eIF-3) complex.

The protein localises to the cytoplasm. Component of the eukaryotic translation initiation factor 3 (eIF-3) complex, which is involved in protein synthesis of a specialized repertoire of mRNAs and, together with other initiation factors, stimulates binding of mRNA and methionyl-tRNAi to the 40S ribosome. The eIF-3 complex specifically targets and initiates translation of a subset of mRNAs involved in cell proliferation. The sequence is that of Eukaryotic translation initiation factor 3 subunit C from Vanderwaltozyma polyspora (strain ATCC 22028 / DSM 70294 / BCRC 21397 / CBS 2163 / NBRC 10782 / NRRL Y-8283 / UCD 57-17) (Kluyveromyces polysporus).